A 232-amino-acid chain; its full sequence is Lipopolysaccharide core heptose(II) kinase WaaY (232 aa).

The protein belongs to the protein kinase superfamily. RfaY/WaaY family.

The catalysed reaction is alpha-D-Glc-(1-&gt;3)-[L-alpha-D-Hep-(1-&gt;7)]-L-alpha-D-Hep-(1-&gt;3)-4-O-PO3(2-)-L-alpha-D-Hep-(1-&gt;5)-[alpha-Kdo-(2-&gt;4)]-alpha-Kdo-(2-&gt;6)-lipid A + ATP = alpha-D-Glc-(1-&gt;3)-[L-alpha-D-Hep-(1-&gt;7)]-4-O-PO3(2-)-L-alpha-D-Hep-(1-&gt;3)-4-O-PO3(2-)-L-alpha-D-Hep-(1-&gt;5)-[alpha-Kdo-(2-&gt;4)]-alpha-Kdo-(2-&gt;6)-lipid A + ADP + H(+). Its pathway is bacterial outer membrane biogenesis; LPS core biosynthesis. Functionally, kinase involved in the biosynthesis of the core oligosaccharide region of lipopolysaccharide (LPS). Catalyzes the phosphorylation of the second heptose unit (HepII) of the inner core. In Escherichia coli (strain K12), this protein is Lipopolysaccharide core heptose(II) kinase WaaY.